The following is a 67-amino-acid chain: Small ribosomal subunit protein eS27 (67 aa).

Zn(2+) is bound by residues Cys22, Cys25, Cys41, and Cys44. Residues 22–44 form a C4-type zinc finger; the sequence is CPDCGNEQVTFSHAAMVVRCLVC.

Belongs to the eukaryotic ribosomal protein eS27 family. In terms of assembly, part of the 30S ribosomal subunit. It depends on Zn(2+) as a cofactor.

In Pyrobaculum calidifontis (strain DSM 21063 / JCM 11548 / VA1), this protein is Small ribosomal subunit protein eS27.